A 387-amino-acid polypeptide reads, in one-letter code: Penicillopepsin-1 (387 aa).

A signal peptide spans M1–A19. A propeptide spans A20–A66 (activation peptide). One can recognise a Peptidase A1 domain in the interval Y85–A384. Active-site residues include D101 and D279. The N-linked (GlcNAc...) asparagine glycan is linked to N304. A disulfide bond links C315 and C347.

It belongs to the peptidase A1 family. In terms of assembly, monomer.

It localises to the secreted. It catalyses the reaction Hydrolysis of proteins with broad specificity similar to that of pepsin A, preferring hydrophobic residues at P1 and P1', but also cleaving 20-Gly-|-Glu-21 in the B chain of insulin. Clots milk, and activates trypsinogen.. In terms of biological role, secreted aspartic endopeptidase that allows assimilation of proteinaceous substrates. The scissile peptide bond is attacked by a nucleophilic water molecule activated by two aspartic residues in the active site. Shows a broad primary substrate specificity. Favors hydrophobic residues at the P1 and P1' positions, but can also activate trypsinogen and hydrolyze the B chain of insulin between positions 'Gly-20' and 'Glu-21'. In Talaromyces stipitatus (strain ATCC 10500 / CBS 375.48 / QM 6759 / NRRL 1006) (Penicillium stipitatum), this protein is Penicillopepsin-1 (pepA).